The chain runs to 288 residues: Solute carrier family 25 member 45 (288 aa).

Solcar repeat units lie at residues 1 to 83 (MPVE…TLLV), 97 to 191 (PSYM…LCRQ), and 199 to 286 (PSSA…LLRW). A run of 6 helical transmembrane segments spans residues 6–26 (FVAGWISGALGLVLGHPFDTV), 63–83 (IASIAVVNSVLFGVYSNTLLV), 100–120 (MHIFLAGCTGGFLQAYCLAPF), 166–186 (GAWALTLRDTPTVGIYFITYE), 202–222 (ATVLVAGGFAGIASWVAATPL), and 266–286 (SARAFPVNAVTFLSYEYLLRW).

The protein belongs to the mitochondrial carrier (TC 2.A.29) family.

It is found in the mitochondrion inner membrane. The polypeptide is Solute carrier family 25 member 45 (SLC25A45) (Homo sapiens (Human)).